The primary structure comprises 143 residues: Transcriptional regulator MraZ (143 aa).

SpoVT-AbrB domains follow at residues 5-47 (EYEH…TLEE) and 76-119 (AVEV…DRAS).

Belongs to the MraZ family. In terms of assembly, forms oligomers.

The protein localises to the cytoplasm. It is found in the nucleoid. This is Transcriptional regulator MraZ from Staphylococcus carnosus (strain TM300).